Consider the following 247-residue polypeptide: GTP cyclohydrolase 1 type 2 homolog (247 aa).

A divalent metal cation-binding residues include His-63, His-64, Asp-101, His-215, and Glu-219.

The protein belongs to the GTP cyclohydrolase I type 2/NIF3 family. Homohexamer.

In Buchnera aphidicola subsp. Schizaphis graminum (strain Sg), this protein is GTP cyclohydrolase 1 type 2 homolog.